The following is a 161-amino-acid chain: MNLAISIALLLTVLQVSRGQKVTSLTACLVDQSLRLDCRHENTTSSPIQYEFSLTRETKKHVLFGTVGVPEHTYRSRTNFTSKYNMKVLYLSAFTXKDEGTYTCXLHHSGHSPPISSQNVTVLRDKLVKCEGISLLAQNTSWLXLLLLSLSLLQATDFMSL.

Residues 1–19 (MNLAISIALLLTVLQVSRG) form the signal peptide. A Pyrrolidone carboxylic acid modification is found at Gln20. One can recognise an Ig-like V-type domain in the interval 20 to 126 (QKVTSLTACL…SQNVTVLRDK (107 aa)). 2 disulfides stabilise this stretch: Cys28–Cys130 and Cys38–Cys104. Asn42 and Asn79 each carry an N-linked (GlcNAc...) asparagine glycan. A Phosphoserine modification is found at Ser82. An N-linked (GlcNAc...) asparagine glycan is attached at Asn119. The GPI-anchor amidated cysteine; alternate moiety is linked to residue Cys130. A propeptide spans 131–161 (EGISLLAQNTSWLXLLLLSLSLLQATDFMSL) (removed in mature form). Asn139 is a glycosylation site (N-linked (GlcNAc...) asparagine).

It localises to the cell membrane. In terms of biological role, may play a role in cell-cell or cell-ligand interactions during synaptogenesis and other events in the brain. This chain is Thy-1 membrane glycoprotein (THY1), found in Macaca mulatta (Rhesus macaque).